Here is a 462-residue protein sequence, read N- to C-terminus: Citrate synthase, mitochondrial (462 aa).

The N-terminal 21 residues, 1–21 (MRSINQLLKQASLSQKSQYNF), are a transit peptide targeting the mitochondrion. Catalysis depends on residues His300, His346, and Asp401.

The protein belongs to the citrate synthase family. As to quaternary structure, homodimer.

It is found in the mitochondrion matrix. The protein resides in the cytoplasm. The protein localises to the cytoskeleton. The enzyme catalyses oxaloacetate + acetyl-CoA + H2O = citrate + CoA + H(+). The protein operates within carbohydrate metabolism; tricarboxylic acid cycle; isocitrate from oxaloacetate: step 1/2. Functionally, structural protein involved in oral morphogenesis and in pronuclear behavior during conjugation. Respiratory enzyme. This chain is Citrate synthase, mitochondrial, found in Tetrahymena thermophila.